A 117-amino-acid polypeptide reads, in one-letter code: MDTETSPLLSHNLSTREGIKQSTQGFLAHTIARHPGITAIILGILILLVIILIVVAIVYYNRSVDCKSTMPKLPPPGYYVQQPEPHHHFPVFFRKRKNSTTQQHIPSDEQLAELAHS.

An N-linked (GlcNAc...) asparagine; by host glycan is attached at N12. A helical transmembrane segment spans residues 39–59 (AIILGILILLVIILIVVAIVY). N61 and N98 each carry an N-linked (GlcNAc...) asparagine; by host glycan. Residues 97–117 (KNSTTQQHIPSDEQLAELAHS) form a disordered region.

Belongs to the asfivirus minor capsid protein p17 family. In terms of assembly, interacts with the minor capsid protein M1249L and with the hexon capsid protein p72 capsomers; these interactions form a rigid zipper structure that stabilizes the capsomers. Interacts with host STING1.

It is found in the virion membrane. It localises to the host endoplasmic reticulum membrane. Together with the penton and the other minor capsid proteins (M1249L, p49), forms a complicated network immediately below the outer capsid shell, stabilizing the whole capsid. Three copies of p17 encircle each p72 capsomer in the inner capsid shell, anchoring p72 capsomers on the inner membrane. Required for the assembly of the capsid and icosahedral morphogenesis. Additionally, inhibits the host cGAS-STING pathway through its interaction with STING1 and subsequent interference of the recruitment of downstream components TBK1 and IKBKE. The sequence is that of Minor capsid protein p17 from Ornithodoros (relapsing fever ticks).